The primary structure comprises 490 residues: Interferon-induced protein with tetratricopeptide repeats 3 (490 aa).

TPR repeat units follow at residues 51–84 (ATMY…IQQE), 94–127 (LVTW…CKKF), 136–169 (SELD…KPNN), 172–206 (FSSG…SPDN), 207–240 (QYVK…SPCQ), 241–274 (TDVL…TPNN), 415–448 (PNYW…LLRD), and 450–481 (PSGI…SPRE). Phosphoserine is present on residues serine 203 and serine 237. The interval 467–490 (SEEMGQGAVSSSPRELLSNSEQLN) is disordered. Residues 474–490 (AVSSSPRELLSNSEQLN) show a composition bias toward polar residues. Serine 478 carries the phosphoserine modification.

Belongs to the IFIT family. In terms of assembly, component of an interferon-dependent multiprotein complex, at least composed of IFIT1, IFIT2 and IFIT3. Interacts with IFIT1 and IFIT2. Interacts (via N-terminus) with MAVS, TBK1, TRAF6 and RIGI. Interacts with COPS5. In terms of tissue distribution, expression significantly higher in peripheral blood mononuclear cells (PBMCs) and monocytes from systemic lupus erythematosus (SLE) patients than in those from healthy individuals (at protein level). Spleen, lung, leukocytes, lymph nodes, placenta, bone marrow and fetal liver.

The protein localises to the cytoplasm. The protein resides in the mitochondrion. In terms of biological role, IFN-induced antiviral protein which acts as an inhibitor of cellular as well as viral processes, cell migration, proliferation, signaling, and viral replication. Enhances MAVS-mediated host antiviral responses by serving as an adapter bridging TBK1 to MAVS which leads to the activation of TBK1 and phosphorylation of IRF3 and phosphorylated IRF3 translocates into nucleus to promote antiviral gene transcription. Exhibits an antiproliferative activity via the up-regulation of cell cycle negative regulators CDKN1A/p21 and CDKN1B/p27. Normally, CDKN1B/p27 turnover is regulated by COPS5, which binds CDKN1B/p27 in the nucleus and exports it to the cytoplasm for ubiquitin-dependent degradation. IFIT3 sequesters COPS5 in the cytoplasm, thereby increasing nuclear CDKN1B/p27 protein levels. Up-regulates CDKN1A/p21 by down-regulating MYC, a repressor of CDKN1A/p21. Can negatively regulate the apoptotic effects of IFIT2. This chain is Interferon-induced protein with tetratricopeptide repeats 3 (IFIT3), found in Homo sapiens (Human).